The primary structure comprises 549 residues: Cation/acetate symporter ActP (549 aa).

13 helical membrane-spanning segments follow: residues 32–54, 75–97, 102–124, 145–167, 182–204, 211–233, 263–285, 298–320, 361–383, 404–423, 428–450, 462–484, and 494–516; these read IQAIIMFVLFVGFTLYITYWASK, GMAIAGDFMSAASFLGISALVYT, GLIYSIGFLIGWPIILFLIAERL, IRILSAIGSLFVVALYLIAQMVG, VAVVLVGILMVLYVLFGGMLATT, AILLLAGATFMALMVMKIVNFNF, ALSLGLALMFGTAGLPHIIMRFF, FYATGFIGYFYILTFIIGFGAIL, AVAFATILAVVAGLTLAGASAVS, VSKITVVILGFIAIGLGILF, IAFMVGLAFSIAASCNFPIILLS, LVGGWLGLITAVVLMILGPTIWV, and YPYEYPALFSMIIAFIGSWLFSI.

It belongs to the sodium:solute symporter (SSF) (TC 2.A.21) family.

The protein localises to the cell inner membrane. Its function is as follows. Transports acetate. In Photorhabdus laumondii subsp. laumondii (strain DSM 15139 / CIP 105565 / TT01) (Photorhabdus luminescens subsp. laumondii), this protein is Cation/acetate symporter ActP.